The chain runs to 350 residues: LysM domain-containing GPI-anchored protein 2 (350 aa).

The signal sequence occupies residues 1 to 23 (METSCFTLLGLLVSLSFFLTLSA). 4 N-linked (GlcNAc...) asparagine glycosylation sites follow: N30, N48, N76, and N99. Disulfide bonds link C31–C97, C38–C161, C95–C159, and C97–C161. LysM domains are found at residues 108-155 (IEYT…KFWI) and 172-216 (YAHV…PLDV). Chitin is bound by residues 114–120 (KDDILSF) and 142–149 (PDPNKIEI). Residues N193, N238, N258, N289, and N305 are each glycosylated (N-linked (GlcNAc...) asparagine). 2 disulfides stabilise this stretch: C221–C253 and C248–C277. A lipid anchor (GPI-anchor amidated aspartate) is attached at D318. Residues 319–350 (SAGPDNYASTLSSSFNFVIVLIQCALLCLCLL) constitute a propeptide, removed in mature form.

Forms homooligomers. Interacts with CERK1. Binds to chitin oligosaccharide elicitor.

It is found in the cell membrane. Chitin elicitor-binding protein involved in the perception of chitin oligosaccharide elicitor. This Arabidopsis thaliana (Mouse-ear cress) protein is LysM domain-containing GPI-anchored protein 2 (LYM2).